The primary structure comprises 493 residues: tRNA(Ile)-lysidine synthase, chloroplastic (493 aa).

Residue 68–73 (SGGQDS) coordinates ATP.

Belongs to the tRNA(Ile)-lysidine synthase family.

It localises to the plastid. The protein resides in the chloroplast. It carries out the reaction cytidine(34) in tRNA(Ile2) + L-lysine + ATP = lysidine(34) in tRNA(Ile2) + AMP + diphosphate + H(+). In terms of biological role, ligates lysine onto the cytidine present at position 34 of the AUA codon-specific tRNA(Ile) that contains the anticodon CAU, in an ATP-dependent manner. Cytidine is converted to lysidine, thus changing the amino acid specificity of the tRNA from methionine to isoleucine. In Staurastrum punctulatum (Green alga), this protein is tRNA(Ile)-lysidine synthase, chloroplastic.